A 79-amino-acid chain; its full sequence is MWIYILVGIICLLAGLAGGFFIARRYMMSYLKNNPPINEQMLQMMMAQMGQKPSQKKINQMMSAMNKQQEKEKPKKTKK.

A helical membrane pass occupies residues 2 to 22 (WIYILVGIICLLAGLAGGFFI). Over residues 57-66 (KINQMMSAMN) the composition is skewed to polar residues. A disordered region spans residues 57 to 79 (KINQMMSAMNKQQEKEKPKKTKK).

The protein belongs to the UPF0154 family.

The protein localises to the cell membrane. The protein is UPF0154 protein Lm4b_01315 of Listeria monocytogenes serotype 4b (strain CLIP80459).